A 146-amino-acid polypeptide reads, in one-letter code: Ribonuclease H (146 aa).

The RNase H type-1 domain occupies Met-1 to Lys-143. Mg(2+) contacts are provided by Asp-10, Glu-48, Asp-70, and Asp-135.

It belongs to the RNase H family. Monomer. Mg(2+) serves as cofactor.

It is found in the cytoplasm. It catalyses the reaction Endonucleolytic cleavage to 5'-phosphomonoester.. Its function is as follows. Endonuclease that specifically degrades the RNA of RNA-DNA hybrids. The protein is Ribonuclease H of Chlorobaculum parvum (strain DSM 263 / NCIMB 8327) (Chlorobium vibrioforme subsp. thiosulfatophilum).